Consider the following 247-residue polypeptide: MSRFGVFIIGVLFFMSVCDVLRTVSAEEHSHDENHVHEKDDFEAEFGDETDSQSFSQGTEEDHIEVREQSSFVKPTAVHHAKDLPTLRIFYCVSCGYKQAFDQFTTFAKEKYPNMPIEGANFAPVLWKAYVAQALSFVKMAVLVLVLGGINPFERFGLGYPQILQHAHGNKMSSCMLVFMLGNLVEQSLISTGAFEVYLGNEQIWSKIESGRVPSPQEFMQLIDAQLAVLGKAPVNTESFGEFQQTV.

The signal sequence occupies residues Met1–Ala26. Cys92 and Cys95 form a disulfide bridge.

This sequence belongs to the SelWTH family. SELT subfamily. In terms of tissue distribution, broadly expressed in neurons of nervous system including ADL, ASH, ASI, ASJ, ASK and AWB amphid sensilla neurons, in epithelial cells including hypodermal, arcade, pharyngeal, vulval and rectal cells, and in somatic muscle cells of the head, neck and body wall, and non-striated pharyngeal muscles.

It is found in the endoplasmic reticulum. The enzyme catalyses [thioredoxin]-dithiol + NADP(+) = [thioredoxin]-disulfide + NADPH + H(+). Probably has thioredoxin reductase-like oxidoreductase activity. Plays a role in regulating the oxidative stress response, and odorant and pathogenic bacteria avoidance behavior. The chain is Thioredoxin reductase-like selenoprotein T homolog selt-1.1 from Caenorhabditis elegans.